Here is a 203-residue protein sequence, read N- to C-terminus: Large ribosomal subunit protein bL25 (203 aa).

The protein belongs to the bacterial ribosomal protein bL25 family. CTC subfamily. As to quaternary structure, part of the 50S ribosomal subunit; part of the 5S rRNA/L5/L18/L25 subcomplex. Contacts the 5S rRNA. Binds to the 5S rRNA independently of L5 and L18.

This is one of the proteins that binds to the 5S RNA in the ribosome where it forms part of the central protuberance. This chain is Large ribosomal subunit protein bL25, found in Psychromonas ingrahamii (strain DSM 17664 / CCUG 51855 / 37).